The following is a 298-amino-acid chain: ADP/ATP translocase 1 (298 aa).

Over 1–7 (MSDQALS) the chain is Mitochondrial intermembrane. The residue at position 2 (Ser2) is an N-acetylserine. The stretch at 6-98 (LSFLKDFLAG…FAFKDKYKQI (93 aa)) is one Solcar 1 repeat. Ser7 carries the phosphoserine modification. Residues 8–37 (FLKDFLAGGVAAAISKTAVAPIERVKLLLQ) form a helical membrane-spanning segment. At 38-74 (VQHASKQISAEKQYKGIIDCVVRIPKEQGFLSFWRGN) the chain is on the mitochondrial matrix side. Lys52 carries the post-translational modification N6,N6,N6-trimethyllysine. Lys52 carries the N6-methyllysine modification. The chain crosses the membrane as a helical span at residues 75-99 (LANVIRYFPTQALNFAFKDKYKQIF). Arg80 and Lys92 together coordinate ADP. Residues 100–109 (LGGVDRHKQF) lie on the Mitochondrial intermembrane side of the membrane. The helical transmembrane segment at 110-130 (WRYFAGNLASGGAAGATSLCF) threads the bilayer. Solcar repeat units lie at residues 111–201 (RYFA…AKGM) and 212–297 (VSWM…IKKF). At 131–178 (VYPLDFARTRLAADVGKGAAQREFTGLGNCITKIFKSDGLRGLYQGFN) the chain is on the mitochondrial matrix side. Position 147 is an N6-succinyllysine (Lys147). Residue Cys160 is modified to S-nitrosocysteine. Residues 179-199 (VSVQGIIIYRAAYFGVYDTAK) form a helical membrane-spanning segment. Residues 200-210 (GMLPDPKNVHI) are Mitochondrial intermembrane-facing. The helical transmembrane segment at 211 to 231 (IVSWMIAQTVTAVAGLVSYPF) threads the bilayer. The Mitochondrial matrix portion of the chain corresponds to 232-273 (DTVRRRMMMQSGRKGADIMYTGTVDCWRKIAKDEGPKAFFKG). Arg235 provides a ligand contact to ADP. The segment at 235–240 (RRRMMM) is important for transport activity. The short motif at 235-240 (RRRMMM) is the Nucleotide carrier signature motif element. An N6-succinyllysine mark is found at Lys245 and Lys272. Residues 274–291 (AWSNVLRGMGGAFVLVLY) form a helical membrane-spanning segment. Residues 292–298 (DEIKKFV) are Mitochondrial intermembrane-facing.

The protein belongs to the mitochondrial carrier (TC 2.A.29) family. Monomer. Found in a complex with ARL2, ARL2BP and SLC25A4/ANT1. Interacts with ARL2BP. Interacts with TIMM44; leading to inhibit the presequence translocase TIMM23, thereby promoting stabilization of PINK1. Post-translationally, under cell death induction, transglutaminated by TGM2. Transglutamination leads to formation of covalent cross-links between a glutamine and the epsilon-amino group of a lysine residue, forming polymers. In terms of tissue distribution, detected in heart muscle (at protein level). Detected in heart.

Its subcellular location is the mitochondrion inner membrane. The protein localises to the membrane. It carries out the reaction ADP(in) + ATP(out) = ADP(out) + ATP(in). The enzyme catalyses H(+)(in) = H(+)(out). With respect to regulation, the matrix-open state (m-state) is inhibited by the membrane-permeable bongkrekic acid (BKA). The cytoplasmic-open state (c-state) is inhibited by the membrane-impermeable toxic inhibitor carboxyatractyloside (CATR). Proton transporter activity is inhibited by ADP:ATP antiporter activity. Its function is as follows. ADP:ATP antiporter that mediates import of ADP into the mitochondrial matrix for ATP synthesis, and export of ATP out to fuel the cell. Cycles between the cytoplasmic-open state (c-state) and the matrix-open state (m-state): operates by the alternating access mechanism with a single substrate-binding site intermittently exposed to either the cytosolic (c-state) or matrix (m-state) side of the inner mitochondrial membrane. In addition to its ADP:ATP antiporter activity, also involved in mitochondrial uncoupling and mitochondrial permeability transition pore (mPTP) activity. Plays a role in mitochondrial uncoupling by acting as a proton transporter: proton transport uncouples the proton flows via the electron transport chain and ATP synthase to reduce the efficiency of ATP production and cause mitochondrial thermogenesis. Proton transporter activity is inhibited by ADP:ATP antiporter activity, suggesting that SLC25A4/ANT1 acts as a master regulator of mitochondrial energy output by maintaining a delicate balance between ATP production (ADP:ATP antiporter activity) and thermogenesis (proton transporter activity). Proton transporter activity requires free fatty acids as cofactor, but does not transport it. Probably mediates mitochondrial uncoupling in tissues that do not express UCP1. Also plays a key role in mPTP opening, a non-specific pore that enables free passage of the mitochondrial membranes to solutes of up to 1.5 kDa, and which contributes to cell death. It is however unclear if SLC25A4/ANT1 constitutes a pore-forming component of mPTP or regulates it. Acts as a regulator of mitophagy independently of ADP:ATP antiporter activity: promotes mitophagy via interaction with TIMM44, leading to inhibit the presequence translocase TIMM23, thereby promoting stabilization of PINK1. This chain is ADP/ATP translocase 1, found in Bos taurus (Bovine).